Here is a 499-residue protein sequence, read N- to C-terminus: 3-octaprenyl-4-hydroxybenzoate carboxy-lyase (499 aa).

A Mn(2+)-binding site is contributed by Asn173. Residues 176-178 (IYR), 190-192 (RWL), and 195-196 (RG) each bind prenylated FMN. Mn(2+) is bound at residue Glu239. Asp288 functions as the Proton donor in the catalytic mechanism.

Belongs to the UbiD family. As to quaternary structure, homohexamer. Prenylated FMN is required as a cofactor. It depends on Mn(2+) as a cofactor.

Its subcellular location is the cell membrane. The enzyme catalyses a 4-hydroxy-3-(all-trans-polyprenyl)benzoate + H(+) = a 2-(all-trans-polyprenyl)phenol + CO2. It functions in the pathway cofactor biosynthesis; ubiquinone biosynthesis. Its function is as follows. Catalyzes the decarboxylation of 3-octaprenyl-4-hydroxy benzoate to 2-octaprenylphenol, an intermediate step in ubiquinone biosynthesis. This is 3-octaprenyl-4-hydroxybenzoate carboxy-lyase from Blochmanniella floridana.